Reading from the N-terminus, the 327-residue chain is D-alanine--D-alanine ligase (327 aa).

One can recognise an ATP-grasp domain in the interval 113–312 (KRLWMTHDLS…YEDFVMQVVA (200 aa)). 139 to 194 (VADLGLPLIVKPAREGSSIGLSKVTDASQMREAFEKAAALDNDVIAETFIDGAELT) is an ATP binding site. Mg(2+) is bound by residues Asp266, Glu279, and Asn281.

Belongs to the D-alanine--D-alanine ligase family. The cofactor is Mg(2+). It depends on Mn(2+) as a cofactor.

The protein localises to the cytoplasm. It catalyses the reaction 2 D-alanine + ATP = D-alanyl-D-alanine + ADP + phosphate + H(+). It participates in cell wall biogenesis; peptidoglycan biosynthesis. Functionally, cell wall formation. The sequence is that of D-alanine--D-alanine ligase from Cupriavidus pinatubonensis (strain JMP 134 / LMG 1197) (Cupriavidus necator (strain JMP 134)).